Reading from the N-terminus, the 538-residue chain is Putative cysteine ligase BshC (538 aa).

The stretch at 460–484 (KINEQIELLERMLKRNVEKKHEVEL) forms a coiled coil.

Belongs to the BshC family.

In terms of biological role, involved in bacillithiol (BSH) biosynthesis. May catalyze the last step of the pathway, the addition of cysteine to glucosamine malate (GlcN-Mal) to generate BSH. This is Putative cysteine ligase BshC from Bacillus cereus (strain ZK / E33L).